Consider the following 171-residue polypeptide: Methylated-DNA--protein-cysteine methyltransferase (171 aa).

The Nucleophile; methyl group acceptor role is filled by C139.

Belongs to the MGMT family.

It localises to the cytoplasm. It catalyses the reaction a 6-O-methyl-2'-deoxyguanosine in DNA + L-cysteinyl-[protein] = S-methyl-L-cysteinyl-[protein] + a 2'-deoxyguanosine in DNA. The enzyme catalyses a 4-O-methyl-thymidine in DNA + L-cysteinyl-[protein] = a thymidine in DNA + S-methyl-L-cysteinyl-[protein]. Involved in the cellular defense against the biological effects of O6-methylguanine (O6-MeG) and O4-methylthymine (O4-MeT) in DNA. Repairs the methylated nucleobase in DNA by stoichiometrically transferring the methyl group to a cysteine residue in the enzyme. This is a suicide reaction: the enzyme is irreversibly inactivated. This chain is Methylated-DNA--protein-cysteine methyltransferase, found in Shigella flexneri.